The following is a 190-amino-acid chain: MIKLHRQSYKNLQNISTASPSRVCKSARGKTSTAQKSHVNKGALSCDVHPHQAQELVSQQVELLHVLHRNDEMWRLAVQDTTKHIQSAEKKASRFSRRKQTAPPKTKSLRTPPACSTDKQNAPTVPASPSSYETLGCREQRPENPKDEATLPLTAHNIPKKAPSLLEKIGLKLKRTVEYIGASNCAFEDD.

Residues 88 to 156 are disordered; sequence AEKKASRFSR…DEATLPLTAH (69 aa). Polar residues predominate over residues 117–133; that stretch reads TDKQNAPTVPASPSSYE. Residues 136–149 show a composition bias toward basic and acidic residues; it reads GCREQRPENPKDEA.

The protein belongs to the vexin family. In terms of tissue distribution, expressed in differentiating progenitors in the developing central nervous system (CNS).

The protein localises to the cell membrane. The protein resides in the nucleus. Functionally, required for neurogenesis in the neural plate and retina. Cooperates with cell cycle inhibitor cdknx/p27(xic1) to enhance neurogenesis and increase the levels of the neuronal determination factor neurog2/X-ngngr-1. In Xenopus laevis (African clawed frog), this protein is Vexin.